A 337-amino-acid polypeptide reads, in one-letter code: Adenylosuccinate synthetase (337 aa).

Residues 12–18 (GDEGKGK) and 42–44 (GHT) contribute to the GTP site. Catalysis depends on Asp13, which acts as the Proton acceptor. Mg(2+) is bound by residues Asp13 and Gly42. Residues 13–16 (DEGK), 40–43 (NAGH), Thr124, Arg138, Gln176, Thr191, and Arg253 contribute to the IMP site. The active-site Proton donor is the His43. Residue 249–255 (TVTGRRR) participates in substrate binding. GTP-binding positions include Arg255, 281 to 283 (GVD), and 321 to 323 (STG).

Belongs to the adenylosuccinate synthetase family. Homodimer. The cofactor is Mg(2+).

It is found in the cytoplasm. The enzyme catalyses IMP + L-aspartate + GTP = N(6)-(1,2-dicarboxyethyl)-AMP + GDP + phosphate + 2 H(+). It participates in purine metabolism; AMP biosynthesis via de novo pathway; AMP from IMP: step 1/2. Functionally, plays an important role in the de novo pathway of purine nucleotide biosynthesis. Catalyzes the first committed step in the biosynthesis of AMP from IMP. In Archaeoglobus fulgidus (strain ATCC 49558 / DSM 4304 / JCM 9628 / NBRC 100126 / VC-16), this protein is Adenylosuccinate synthetase.